We begin with the raw amino-acid sequence, 313 residues long: Protoheme IX farnesyltransferase (313 aa).

The next 8 helical transmembrane spans lie at 32 to 52 (VMSLVVFTALVGMLLAPGDFH), 53 to 73 (PVLAITAMLCIAVGGGAAGAL), 120 to 140 (ILVNWVAGALLAFTIFFYVVI), 153 to 173 (IVIGGAAGALPPVVAWAAVTG), 180 to 200 (LLLFAIIFFWTPPHFWALALF), 226 to 246 (ILLYTIVLVAVAAAPWPLGYF), 248 to 268 (AIYGVASLALGGWMLVLALRV), and 284 to 304 (LFKFSILYLFALFSILLLEVV).

The protein belongs to the UbiA prenyltransferase family. Protoheme IX farnesyltransferase subfamily.

It localises to the cell inner membrane. The catalysed reaction is heme b + (2E,6E)-farnesyl diphosphate + H2O = Fe(II)-heme o + diphosphate. It functions in the pathway porphyrin-containing compound metabolism; heme O biosynthesis; heme O from protoheme: step 1/1. Functionally, converts heme B (protoheme IX) to heme O by substitution of the vinyl group on carbon 2 of heme B porphyrin ring with a hydroxyethyl farnesyl side group. The protein is Protoheme IX farnesyltransferase of Rhodopseudomonas palustris (strain HaA2).